The sequence spans 188 residues: Transcription factor FapR (188 aa).

The protein belongs to the FapR family.

In terms of biological role, transcriptional factor involved in regulation of membrane lipid biosynthesis by repressing genes involved in fatty acid and phospholipid metabolism. The sequence is that of Transcription factor FapR from Bacillus licheniformis (strain ATCC 14580 / DSM 13 / JCM 2505 / CCUG 7422 / NBRC 12200 / NCIMB 9375 / NCTC 10341 / NRRL NRS-1264 / Gibson 46).